Here is a 421-residue protein sequence, read N- to C-terminus: Core-capsid bridging protein (421 aa).

This sequence belongs to the adenoviridae core-capsid bridging protein family. Monomer. Homodimer. Exists in equilibrium between monomers and dimers in solution. Interacts with the histone-like nucleoprotein; this interactions bridge the virus core to the capsid. Interacts with core protein X; this interactions bridge the virus core to the capsid. Interacts with the endosome lysis protein VI; this interactions bridge the virus core to the capsid. Interacts with the peripentonal hexons. Interacts with host NPM1; this interaction might play a role in virus assembly.

The protein resides in the virion. It localises to the host nucleus. The protein localises to the host nucleolus. Its function is as follows. Associates loosely with the viral DNA to form an outer shell around the nucleoprotein-DNA complex and links it with the capsid by binding the endosome lysis protein. Dissociates from the viral genome during entry. Might be involved in nuclear capsid assembly of the viral particles through its association with NPM1/nucleophosmin. This Canine adenovirus serotype 1 (strain CLL) (CAdV-1) protein is Core-capsid bridging protein.